Consider the following 82-residue polypeptide: Small ribosomal subunit protein bS20 (82 aa).

Belongs to the bacterial ribosomal protein bS20 family.

Binds directly to 16S ribosomal RNA. The chain is Small ribosomal subunit protein bS20 from Lysinibacillus sphaericus (strain C3-41).